The sequence spans 513 residues: 2,3-bisphosphoglycerate-independent phosphoglycerate mutase (513 aa).

Mn(2+) is bound by residues aspartate 14 and serine 64. The active-site Phosphoserine intermediate is the serine 64. Substrate contacts are provided by residues histidine 125, 155-156, arginine 187, arginine 193, 259-262, and lysine 333; these read RD and RADR. Positions 400, 404, 441, 442, and 460 each coordinate Mn(2+).

Belongs to the BPG-independent phosphoglycerate mutase family. In terms of assembly, monomer. The cofactor is Mn(2+).

It carries out the reaction (2R)-2-phosphoglycerate = (2R)-3-phosphoglycerate. The protein operates within carbohydrate degradation; glycolysis; pyruvate from D-glyceraldehyde 3-phosphate: step 3/5. Catalyzes the interconversion of 2-phosphoglycerate and 3-phosphoglycerate. The polypeptide is 2,3-bisphosphoglycerate-independent phosphoglycerate mutase (Pseudomonas fluorescens (strain ATCC BAA-477 / NRRL B-23932 / Pf-5)).